The primary structure comprises 102 residues: Plastocyanin (102 aa).

A Plastocyanin-like domain is found at A1–K102. Positions 37, 87, 90, and 95 each coordinate Cu cation.

This sequence belongs to the plastocyanin family. Cu(2+) serves as cofactor.

Its subcellular location is the plastid. It localises to the chloroplast thylakoid membrane. In terms of biological role, participates in electron transfer between P700 and the cytochrome b6-f complex in photosystem I. The chain is Plastocyanin (PETE) from Dryopteris crassirhizoma (Thick stemmed wood fern).